The chain runs to 286 residues: uncharacterized protein (286 aa).

This is an uncharacterized protein from Acidianus convivator (ATV).